We begin with the raw amino-acid sequence, 106 residues long: Halilectin 3, beta chain (106 aa).

An N-linked (GlcNAc...) asparagine glycan is attached at N65.

As to quaternary structure, probable heterotrimer consisting of an alpha chain and two beta chains. The alpha chain can probably have different glycosylation states. Glycosylated.

Its function is as follows. Lectin with affinity for N-acetyl-galactosamine, carragenan and glycoprotein porcine stomach mucin (PSM). Has metal-independent hemagglutinating activity towards erythrocytes from rabbit and human. Hemagglutinating activity is not inhibited by D-galactose, D-glucose, D-mannose, D-fucose, methyl-alpha-D-galactopyranoside, methyl-alpha-D-glucopyranoside, N-acetyl-glucosamine, N-acetyl-mannosamine, D-fructose, alpha-D-lactose, beta-D-lactose, D-lactulose, D-sucrose, fucoidan or glycoproteins thyroglobulin and ovalmucoid. The polypeptide is Halilectin 3, beta chain (Haliclona caerulea (Blue Caribbean sponge)).